A 254-amino-acid polypeptide reads, in one-letter code: 21S rRNA pseudouridine(2819) synthase (254 aa).

D71 is an active-site residue.

This sequence belongs to the pseudouridine synthase RluA family.

It is found in the mitochondrion. The enzyme catalyses uridine(2819) in 21S rRNA = pseudouridine(2819) in 21S rRNA. Functionally, pseudouridylate synthase responsible for the pseudouridine-2819 formation in mitochondrial 21S rRNA. May modulate the efficiency or the fidelity of the mitochondrial translation machinery. This is 21S rRNA pseudouridine(2819) synthase (PUS5) from Saccharomyces cerevisiae (strain ATCC 204508 / S288c) (Baker's yeast).